Reading from the N-terminus, the 769-residue chain is Polyribonucleotide nucleotidyltransferase (769 aa).

Positions 490 and 496 each coordinate Mg(2+). In terms of domain architecture, KH spans 557-616; that stretch reads PKIDTIMIPVDKIKVVIGKGGEQIDKIIAETGVKIDIDDEGLCSIFSSDQSAIDRAKEII. The S1 motif domain occupies 626–694; the sequence is GEVYEAKVVR…DKGRVDASMR (69 aa). The segment covering 700-734 has biased composition (basic and acidic residues); sequence PEGYVEPERKPRERRDNKDRRNGNGFDRRNNDRNN. The segment at 700–769 is disordered; that stretch reads PEGYVEPERK…FPELSTKKPE (70 aa). Residues 736–746 show a composition bias toward low complexity; it reads NNHNNNSGNHS. Residues 747 to 769 are compositionally biased toward basic and acidic residues; that stretch reads FELRERKSHVDHEFPELSTKKPE.

This sequence belongs to the polyribonucleotide nucleotidyltransferase family. The cofactor is Mg(2+).

The protein resides in the cytoplasm. The enzyme catalyses RNA(n+1) + phosphate = RNA(n) + a ribonucleoside 5'-diphosphate. Its function is as follows. Involved in mRNA degradation. Catalyzes the phosphorolysis of single-stranded polyribonucleotides processively in the 3'- to 5'-direction. The chain is Polyribonucleotide nucleotidyltransferase from Lactococcus lactis subsp. cremoris (strain SK11).